A 165-amino-acid polypeptide reads, in one-letter code: Plastocyanin, chloroplastic (165 aa).

A chloroplast-targeting transit peptide spans 1–66; that stretch reads MATVTSSAAV…AGILAGNAMA (66 aa). A Plastocyanin-like domain is found at 67–165; sequence AEVLLGSSDG…AGMVGKVTVN (99 aa). The Cu cation site is built by histidine 103, cysteine 150, histidine 153, and methionine 158.

This sequence belongs to the plastocyanin family. It depends on Cu(2+) as a cofactor.

The protein resides in the plastid. It localises to the chloroplast thylakoid membrane. Its function is as follows. Participates in electron transfer between P700 and the cytochrome b6-f complex in photosystem I. The chain is Plastocyanin, chloroplastic (PETE) from Silene latifolia subsp. alba (White campion).